The primary structure comprises 334 residues: Aspartate carbamoyltransferase catalytic subunit (334 aa).

The carbamoyl phosphate site is built by Arg71 and Thr72. Lys99 lines the L-aspartate pocket. 3 residues coordinate carbamoyl phosphate: Arg121, His151, and Gln154. Residues Arg184 and Arg239 each coordinate L-aspartate. Gly280 and Pro281 together coordinate carbamoyl phosphate.

This sequence belongs to the aspartate/ornithine carbamoyltransferase superfamily. ATCase family. As to quaternary structure, heterododecamer (2C3:3R2) of six catalytic PyrB chains organized as two trimers (C3), and six regulatory PyrI chains organized as three dimers (R2).

The enzyme catalyses carbamoyl phosphate + L-aspartate = N-carbamoyl-L-aspartate + phosphate + H(+). Its pathway is pyrimidine metabolism; UMP biosynthesis via de novo pathway; (S)-dihydroorotate from bicarbonate: step 2/3. Its function is as follows. Catalyzes the condensation of carbamoyl phosphate and aspartate to form carbamoyl aspartate and inorganic phosphate, the committed step in the de novo pyrimidine nucleotide biosynthesis pathway. The chain is Aspartate carbamoyltransferase catalytic subunit from Pseudomonas syringae pv. syringae (strain B728a).